The sequence spans 133 residues: Lanmodulin (133 aa).

Residues 1-21 (MAFRLSSAVLLAALVAAPAYA) form the signal peptide. Nd(3+) is bound by residues Asp-35, Asp-37, Asp-39, Thr-41, Glu-46, Asp-59, Asp-61, Asp-63, Thr-65, Glu-70, Asp-84, Asp-86, Asp-88, Thr-90, Glu-95, Asn-108, Asp-110, Asp-112, Thr-114, and Glu-119. 4 consecutive EF-hand domains span residues 35–46 (DPDKDGTIDLKE), 59–70 (DPDKDGTLDAKE), 84–95 (DPDNDGTLDKKE), and 108–119 (NPDNDGTIDARE).

In terms of assembly, monomer.

The protein resides in the periplasm. In terms of biological role, high-affinity lanthanide (Ln)-binding protein. Shows 100 million-fold selectivity for La(3+) over Ca(2+). Binds 3 equiv of Ln(3+) with picomolar affinity and a fourth with approximately micromolar affinity. May be involved in receiving and then transporting lanthanides (such as La(3+), Nd(3+) and Sm(3+)) to a specific periplasmic destination. The polypeptide is Lanmodulin (Methylorubrum extorquens (strain ATCC 14718 / DSM 1338 / JCM 2805 / NCIMB 9133 / AM1) (Methylobacterium extorquens)).